The sequence spans 695 residues: Segment polarity protein dishevelled homolog DVL-1 (695 aa).

Residues 1–85 form the DIX domain; sequence MAETKIIYHM…RVVSWLVLAE (85 aa). Residues 89–237 form a disordered region; that stretch reads SDAGSQGTDS…LRQADRASSF (149 aa). The span at 142 to 151 shows a compositional bias: basic residues; sequence SHRRERARRR. Residues 152 to 171 are compositionally biased toward basic and acidic residues; that stretch reads NREEAARTNGHPRGDRRRDV. Positions 176–192 are enriched in low complexity; it reads DSASTALSSELESSSFV. S194 bears the Phosphoserine mark. Residues 200–214 show a composition bias toward low complexity; the sequence is TSRLSSSTEQSTSSR. Over residues 215–228 the composition is skewed to basic residues; that stretch reads LIRKHKRRRRKQRL. In terms of domain architecture, PDZ spans 251-323; that stretch reads TVTLNMERHH…NDDAVRVLRE (73 aa). The DEP domain maps to 425 to 499; sequence PDSGLEIRDR…SEQCYYVFGD (75 aa). Residues 543–667 form a disordered region; sequence PGPPPCFPPA…PGGPPVRELA (125 aa). The span at 551–580 shows a compositional bias: low complexity; sequence PAYQDPGFSYGSGSTGSQQSEGSKSSGSTR. Polar residues predominate over residues 625 to 636; sequence SRGSSPRSQASA.

The protein belongs to the DSH family. Interacts with CXXC4. Interacts (via PDZ domain) with NXN. Interacts with BRD7 and INVS. Interacts (via PDZ domain) with VANGL1 and VANGL2 (via C-terminus). Interacts with ARRB1; the interaction is enhanced by phosphorylation of DVL1. Interacts with CYLD. Interacts (via PDZ domain) with RYK. Self-associates (via DIX domain) and forms higher homooligomers. Interacts (via PDZ domain) with DACT1 and FZD7, where DACT1 and FZD7 compete for the same binding site. Interacts (via DEP domain) with MUSK; the interaction is direct and mediates the formation a DVL1, MUSK and PAK1 ternary complex involved in AChR clustering. Interacts (via PDZ domain) with TMEM88. Interacts with DCDC2. Interacts with FOXK2. Interacts with PKD1 (via extracellular domain). Interacts (via PDZ domain) with CCDC88C/DAPLE; competes with CCDC88C for binding to frizzled receptor FZD7 and dissociates from CCDC88C following initiation of non-canonical Wnt signaling when CCDC88C displaces DVL1 from ligand-activated FZD7. Post-translationally, ubiquitinated; undergoes both 'Lys-48'-linked ubiquitination, leading to its subsequent degradation by the ubiquitin-proteasome pathway, and 'Lys-63'-linked ubiquitination. The interaction with INVS is required for ubiquitination. Deubiquitinated by CYLD, which acts on 'Lys-63'-linked ubiquitin chains.

The protein localises to the cell membrane. The protein resides in the cytoplasm. Its subcellular location is the cytosol. It is found in the cytoplasmic vesicle. Its function is as follows. Participates in Wnt signaling by binding to the cytoplasmic C-terminus of frizzled family members and transducing the Wnt signal to down-stream effectors. Plays a role both in canonical and non-canonical Wnt signaling. Plays a role in the signal transduction pathways mediated by multiple Wnt genes. Required for LEF1 activation upon WNT1 and WNT3A signaling. DVL1 and PAK1 form a ternary complex with MUSK which is important for MUSK-dependent regulation of AChR clustering during the formation of the neuromuscular junction (NMJ). This chain is Segment polarity protein dishevelled homolog DVL-1 (DVL1), found in Homo sapiens (Human).